Consider the following 228-residue polypeptide: 2,3-bisphosphoglycerate-dependent phosphoglycerate mutase (228 aa).

Residues 8-15 (RHGQSEWN), 21-22 (TG), R60, 87-90 (ERHY), K98, 114-115 (RR), and 183-184 (GN) each bind substrate. The active-site Tele-phosphohistidine intermediate is H9. Residue E87 is the Proton donor/acceptor of the active site.

It belongs to the phosphoglycerate mutase family. BPG-dependent PGAM subfamily.

It catalyses the reaction (2R)-2-phosphoglycerate = (2R)-3-phosphoglycerate. The protein operates within carbohydrate degradation; glycolysis; pyruvate from D-glyceraldehyde 3-phosphate: step 3/5. Functionally, catalyzes the interconversion of 2-phosphoglycerate and 3-phosphoglycerate. This is 2,3-bisphosphoglycerate-dependent phosphoglycerate mutase from Staphylococcus haemolyticus (strain JCSC1435).